Reading from the N-terminus, the 1071-residue chain is DNA-directed RNA polymerase subunit beta (1071 aa).

This sequence belongs to the RNA polymerase beta chain family. In terms of assembly, in plastids the minimal PEP RNA polymerase catalytic core is composed of four subunits: alpha, beta, beta', and beta''. When a (nuclear-encoded) sigma factor is associated with the core the holoenzyme is formed, which can initiate transcription.

It localises to the plastid. The protein resides in the chloroplast. The catalysed reaction is RNA(n) + a ribonucleoside 5'-triphosphate = RNA(n+1) + diphosphate. In terms of biological role, DNA-dependent RNA polymerase catalyzes the transcription of DNA into RNA using the four ribonucleoside triphosphates as substrates. This is DNA-directed RNA polymerase subunit beta from Nymphaea alba (White water-lily).